The sequence spans 157 residues: Transcription elongation factor GreA (157 aa).

A coiled-coil region spans residues 1–75 (MSKEIILTQE…VETLINRAKV (75 aa)).

Belongs to the GreA/GreB family.

Its function is as follows. Necessary for efficient RNA polymerase transcription elongation past template-encoded arresting sites. The arresting sites in DNA have the property of trapping a certain fraction of elongating RNA polymerases that pass through, resulting in locked ternary complexes. Cleavage of the nascent transcript by cleavage factors such as GreA or GreB allows the resumption of elongation from the new 3'terminus. GreA releases sequences of 2 to 3 nucleotides. The chain is Transcription elongation factor GreA from Mycoplasma capricolum subsp. capricolum (strain California kid / ATCC 27343 / NCTC 10154).